Consider the following 83-residue polypeptide: Exodeoxyribonuclease 7 small subunit (83 aa).

This sequence belongs to the XseB family. In terms of assembly, heterooligomer composed of large and small subunits.

It localises to the cytoplasm. It carries out the reaction Exonucleolytic cleavage in either 5'- to 3'- or 3'- to 5'-direction to yield nucleoside 5'-phosphates.. In terms of biological role, bidirectionally degrades single-stranded DNA into large acid-insoluble oligonucleotides, which are then degraded further into small acid-soluble oligonucleotides. This Moorella thermoacetica (strain ATCC 39073 / JCM 9320) protein is Exodeoxyribonuclease 7 small subunit.